The sequence spans 501 residues: Tegument protein US24 (501 aa).

It belongs to the herpesviridae US22 family.

The protein resides in the virion tegument. In Human cytomegalovirus (strain Merlin) (HHV-5), this protein is Tegument protein US24 (US24).